The following is a 374-amino-acid chain: Aminomethyltransferase (374 aa).

It belongs to the GcvT family. In terms of assembly, the glycine cleavage system is composed of four proteins: P, T, L and H.

The catalysed reaction is N(6)-[(R)-S(8)-aminomethyldihydrolipoyl]-L-lysyl-[protein] + (6S)-5,6,7,8-tetrahydrofolate = N(6)-[(R)-dihydrolipoyl]-L-lysyl-[protein] + (6R)-5,10-methylene-5,6,7,8-tetrahydrofolate + NH4(+). Its function is as follows. The glycine cleavage system catalyzes the degradation of glycine. This Caldanaerobacter subterraneus subsp. tengcongensis (strain DSM 15242 / JCM 11007 / NBRC 100824 / MB4) (Thermoanaerobacter tengcongensis) protein is Aminomethyltransferase.